Consider the following 921-residue polypeptide: MAPLALVGVALLLGAPHCLGEATPTPSLPPPPANDSDASPGGCQGSYRCQPGVLLPVWEPDDPSLGDKAARAVVYFVAMVYMFLGLSIIADRFMASIEVITSKEKEITITKANGETSVGTVRIWNETVSNLTLMALGSSAPEILLSVIEVCGHNFQAGELGPGTIVGSAAFNMFVVIAVCVYVIPAGESRKIKHLRVFFVTASWSIFAYVWLYLILAVFSPGVVQVWEALLTLVFFPVCVVFAWMADKRLLFYKYVYKRYRTDPRSGIIIGAEGDPPKSIELDGTFVGTEVPGELGALGTGPAEARELDASRREVIQILKDLKQKHPDKDLEQLVGIAKYYALLHQQKSRAFYRIQATRLMTGAGNVLRRHAADAARRPGANDGAPDDEDDGASRIFFEPSLYHCLENCGSVLLSVACQGGEGNSTFYVDYRTEDGSAKAGSDYEYSEGTLVFKPGETQKELRIGIIDDDIFEEDEHFFVRLLNLRVGDAQGMFEPDGGGRPKGRLVAPLLATVTILDDDHAGIFSFQDRLLHVSECMGTVDVRVVRSSGARGTVRLPYRTVDGTARGGGVHYEDACGELEFGDDETMKTLQVKIVDDEEYEKKDNFFIELGQPQWLKRGISALLLNQGDGDRKLTAEEEEAQRIAEMGKPVLGENCRLEVIIEESYDFKNTVDKLIKKTNLALVIGTHSWREQFLEAVTVSAGDEEEDEDGSREERLPSCFDYVMHFLTVFWKVLFACLPPTEYCHGWACFGVCILVIGLLTALIGDLASHFGCTVGLKDSVNAVVFVALGTSIPDTFASKVAALQDQCADASIGNVTGSNAVNVFLGLGVAWSVAAVYWAVQGRPFEVRTGTLAFSVTLFTVFAFVGIAVLLYRRRPHIGGELGGPRGPKLATTALFLGLWFLYILFASLEAYCHIRGF.

Positions 1-20 are cleaved as a signal peptide; sequence MAPLALVGVALLLGAPHCLG. At 21 to 68 the chain is on the extracellular side; that stretch reads EATPTPSLPPPPANDSDASPGGCQGSYRCQPGVLLPVWEPDDPSLGDK. A disordered region spans residues 23–42; it reads TPTPSLPPPPANDSDASPGG. N34 carries an N-linked (GlcNAc...) asparagine glycan. The helical transmembrane segment at 69-90 threads the bilayer; the sequence is AARAVVYFVAMVYMFLGLSIIA. Over 91-130 the chain is Cytoplasmic; that stretch reads DRFMASIEVITSKEKEITITKANGETSVGTVRIWNETVSN. A helical membrane pass occupies residues 131-152; it reads LTLMALGSSAPEILLSVIEVCG. One copy of the Alpha-1 repeat lies at 135–175; that stretch reads ALGSSAPEILLSVIEVCGHNFQAGELGPGTIVGSAAFNMFV. Residues 153-164 lie on the Extracellular side of the membrane; that stretch reads HNFQAGELGPGT. The helical transmembrane segment at 165–185 threads the bilayer; it reads IVGSAAFNMFVVIAVCVYVIP. The Cytoplasmic segment spans residues 186 to 196; it reads AGESRKIKHLR. Residues 197–219 traverse the membrane as a helical segment; sequence VFFVTASWSIFAYVWLYLILAVF. The Extracellular segment spans residues 220–222; that stretch reads SPG. The chain crosses the membrane as a helical span at residues 223–246; the sequence is VVQVWEALLTLVFFPVCVVFAWMA. Topologically, residues 247-720 are cytoplasmic; it reads DKRLLFYKYV…DGSREERLPS (474 aa). The putative calmodulin-binding region stretch occupies residues 248 to 267; that stretch reads KRLLFYKYVYKRYRTDPRSG. The segment at 372-391 is disordered; that stretch reads AADAARRPGANDGAPDDEDD. 2 Calx-beta domains span residues 384–483 and 512–612; these read GAPD…VRLL and ATVT…IELG. Ca(2+) contacts are provided by E407, D443, D468, D469, I471, E473, E476, D518, D519, D520, E536, D598, E599, and E600. S622 carries the post-translational modification Phosphoserine. E665 contacts Ca(2+). A helical transmembrane segment spans residues 721–740; it reads CFDYVMHFLTVFWKVLFACL. At 741–747 the chain is on the extracellular side; that stretch reads PPTEYCH. The chain crosses the membrane as a helical span at residues 748–770; it reads GWACFGVCILVIGLLTALIGDLA. Topologically, residues 771 to 772 are cytoplasmic; that stretch reads SH. Residues 773–791 form a helical membrane-spanning segment; it reads FGCTVGLKDSVNAVVFVAL. One copy of the Alpha-2 repeat lies at 790 to 826; sequence ALGTSIPDTFASKVAALQDQCADASIGNVTGSNAVNV. At 792–822 the chain is on the extracellular side; the sequence is GTSIPDTFASKVAALQDQCADASIGNVTGSN. The N-linked (GlcNAc...) asparagine glycan is linked to N817. The chain crosses the membrane as a helical span at residues 823 to 843; that stretch reads AVNVFLGLGVAWSVAAVYWAV. Residues 844–854 lie on the Cytoplasmic side of the membrane; it reads QGRPFEVRTGT. The helical transmembrane segment at 855–875 threads the bilayer; it reads LAFSVTLFTVFAFVGIAVLLY. Residues 876 to 892 are Extracellular-facing; that stretch reads RRRPHIGGELGGPRGPK. A helical membrane pass occupies residues 893–909; sequence LATTALFLGLWFLYILF. Over 910–921 the chain is Cytoplasmic; it reads ASLEAYCHIRGF.

This sequence belongs to the Ca(2+):cation antiporter (CaCA) (TC 2.A.19) family. SLC8 subfamily. As to expression, detected in neocortex and hippocampus on pyramidal cells, astrocyte processes and dendrites (at protein level). Brain and skeletal muscle.

It localises to the cell membrane. The protein localises to the basolateral cell membrane. Its subcellular location is the perikaryon. It is found in the cell projection. The protein resides in the dendrite. It localises to the dendritic spine. It catalyses the reaction Ca(2+)(in) + 3 Na(+)(out) = Ca(2+)(out) + 3 Na(+)(in). With respect to regulation, calcium transport is down-regulated by Na(+) and stimulated by Ca(2+). Its function is as follows. Mediates the electrogenic exchange of Ca(2+) against Na(+) ions across the cell membrane, and thereby contributes to the regulation of cytoplasmic Ca(2+) levels and Ca(2+)-dependent cellular processes. Contributes to cellular Ca(2+) homeostasis in excitable cells. Contributes to the rapid decrease of cytoplasmic Ca(2+) levels back to baseline after neuronal activation, and thereby contributes to modulate synaptic plasticity, learning and memory. Plays a role in regulating urinary Ca(2+) and Na(+) excretion. This Rattus norvegicus (Rat) protein is Sodium/calcium exchanger 2 (Slc8a2).